A 476-amino-acid polypeptide reads, in one-letter code: Ribulose bisphosphate carboxylase large chain (476 aa).

The propeptide occupies 1-2 (MS). The residue at position 3 (Pro3) is an N-acetylproline. Residue Lys14 is modified to N6,N6,N6-trimethyllysine. 2 residues coordinate substrate: Asn123 and Thr173. The Proton acceptor role is filled by Lys175. Lys177 serves as a coordination point for substrate. Residues Lys201, Asp203, and Glu204 each contribute to the Mg(2+) site. The residue at position 201 (Lys201) is an N6-carboxylysine. His294 acts as the Proton acceptor in catalysis. The substrate site is built by Arg295, His327, and Ser379.

The protein belongs to the RuBisCO large chain family. Type I subfamily. Heterohexadecamer of 8 large chains and 8 small chains; disulfide-linked. The disulfide link is formed within the large subunit homodimers. Mg(2+) serves as cofactor. In terms of processing, the disulfide bond which can form in the large chain dimeric partners within the hexadecamer appears to be associated with oxidative stress and protein turnover.

Its subcellular location is the plastid. The protein localises to the chloroplast. The enzyme catalyses 2 (2R)-3-phosphoglycerate + 2 H(+) = D-ribulose 1,5-bisphosphate + CO2 + H2O. It catalyses the reaction D-ribulose 1,5-bisphosphate + O2 = 2-phosphoglycolate + (2R)-3-phosphoglycerate + 2 H(+). Its function is as follows. RuBisCO catalyzes two reactions: the carboxylation of D-ribulose 1,5-bisphosphate, the primary event in carbon dioxide fixation, as well as the oxidative fragmentation of the pentose substrate in the photorespiration process. Both reactions occur simultaneously and in competition at the same active site. This Brachypodium distachyon (Purple false brome) protein is Ribulose bisphosphate carboxylase large chain.